The sequence spans 873 residues: Zinc fingers and homeoboxes protein 1 (873 aa).

Residues 24–63 (LISDLDEGPPVLTPVENTRAESISSDEEVHESVDSDNQQN) form a disordered region. Position 36 is a phosphothreonine (Thr-36). 3 positions are modified to phosphoserine: Ser-45, Ser-47, and Ser-48. 2 consecutive C2H2-type zinc fingers follow at residues 70 to 93 (YECK…DSEH) and 102 to 125 (YVCV…LKYH). Lys-159 participates in a covalent cross-link: Glycyl lysine isopeptide (Lys-Gly) (interchain with G-Cter in SUMO2). A Phosphoserine modification is found at Ser-202. The disordered stretch occupies residues 202–236 (SVEDVPEEKENEIKPDREEIVENPSSSASESNTST). Basic and acidic residues predominate over residues 212–221 (NEIKPDREEI). Residues 223 to 236 (ENPSSSASESNTST) show a composition bias toward low complexity. The tract at residues 272–432 (NSNLIPKVLI…QNNIQKSQVP (161 aa)) is required for dimerization. Residues 272-564 (NSNLIPKVLI…AQPKQSWNPF (293 aa)) form a required for interaction with NFYA region. The homeobox 1 DNA-binding region spans 284 to 346 (NSIPTYNAAL…LKHGVSWTPE (63 aa)). Residues Lys-441, Lys-454, Lys-485, and Lys-629 each participate in a glycyl lysine isopeptide (Lys-Gly) (interchain with G-Cter in SUMO2) cross-link. 2 DNA-binding regions (homeobox) span residues 464-526 (SFGI…KSNQ) and 569-630 (PQKF…EEKM). Disordered stretches follow at residues 626 to 667 (KEEK…ICKK) and 732 to 770 (SSMN…NNWD). A Phosphoserine modification is found at Ser-648. The homeobox 4 DNA-binding region spans 660-722 (STGKICKKTP…YAWKNGNLKW (63 aa)). Residues 734 to 768 (MNGLSSLRKRGRGRPKGRGRGRPRGRPRGSKRINN) form a required for nuclear localization region. A compositionally biased stretch (basic residues) spans 740–764 (LRKRGRGRPKGRGRGRPRGRPRGSK). The residue at position 774 (Ser-774) is a Phosphoserine. The segment at residues 777–832 (KFKTGTAILKDYYLKHKFLNEQDLDELVNKSHMGYEQVREWFAERQRRSELGIELF) is a DNA-binding region (homeobox 5). The tract at residues 829–873 (IELFEENEEEDEVIDDQEEDEEETDDSDTWEPPRHVKRKLSKSDD) is disordered. Over residues 831 to 857 (LFEENEEEDEVIDDQEEDEEETDDSDT) the composition is skewed to acidic residues. The required for repressor activity stretch occupies residues 831 to 873 (LFEENEEEDEVIDDQEEDEEETDDSDTWEPPRHVKRKLSKSDD). The segment covering 863 to 873 (HVKRKLSKSDD) has biased composition (basic residues).

This sequence belongs to the ZHX family. As to quaternary structure, forms homodimers. Heterodimer (via HD1 domain) with ZHX2 (via HD1 domain). Also forms a heterodimer with ZHX3 which is a prerequisite for repressor activity. Interacts with ATF7IP and NFYA. Interacts (via homeobox domains) with DNMT3B (via PWWP domain). As to expression, ubiquitously expressed. Expressed in podocytes.

The protein localises to the nucleus. Functionally, acts as a transcriptional repressor. Increases DNMT3B-mediated repressive transcriptional activity when DNMT3B is tethered to DNA. May link molecule between DNMT3B and other co-repressor proteins. The chain is Zinc fingers and homeoboxes protein 1 (ZHX1) from Homo sapiens (Human).